The primary structure comprises 183 residues: Isopentenyl-diphosphate Delta-isomerase (183 aa).

Residues His-26 and His-33 each contribute to the Mn(2+) site. Positions 31-169 (PLHFAFSCYV…PFAFSPWMVE (139 aa)) constitute a Nudix hydrolase domain. The active site involves Cys-68. Residue Cys-68 coordinates Mg(2+). His-70 lines the Mn(2+) pocket. Residue Glu-88 participates in Mg(2+) binding. 2 residues coordinate Mn(2+): Glu-118 and Glu-120. Glu-120 is a catalytic residue.

It belongs to the IPP isomerase type 1 family. The cofactor is Mg(2+). Requires Mn(2+) as cofactor.

It is found in the cytoplasm. It carries out the reaction isopentenyl diphosphate = dimethylallyl diphosphate. The protein operates within isoprenoid biosynthesis; dimethylallyl diphosphate biosynthesis; dimethylallyl diphosphate from isopentenyl diphosphate: step 1/1. Functionally, catalyzes the 1,3-allylic rearrangement of the homoallylic substrate isopentenyl (IPP) to its highly electrophilic allylic isomer, dimethylallyl diphosphate (DMAPP). The protein is Isopentenyl-diphosphate Delta-isomerase of Corynebacterium diphtheriae (strain ATCC 700971 / NCTC 13129 / Biotype gravis).